The sequence spans 517 residues: Maturase K (517 aa).

It belongs to the intron maturase 2 family. MatK subfamily.

Its subcellular location is the plastid. The protein localises to the chloroplast. Its function is as follows. Usually encoded in the trnK tRNA gene intron. Probably assists in splicing its own and other chloroplast group II introns. This is Maturase K from Phalaenopsis japonica (Orchid).